The primary structure comprises 825 residues: Zygotic DNA replication licensing factor mcm6-B (825 aa).

The C4-type zinc-finger motif lies at 159–186 (CLDCQTLVRDVEQQFKYTQPSICRNPVC). Residues 347–554 (LYHNLCTSLF…TDYAIARRIV (208 aa)) enclose the MCM domain. 397 to 404 (GDPSTAKS) contributes to the ATP binding site. Residues 529 to 532 (SRFD) carry the Arginine finger motif. Residues 668–679 (DQEDEHEVEEPQ) are compositionally biased toward acidic residues. Residues 668–690 (DQEDEHEVEEPQEGINGDADVPN) are disordered.

The protein belongs to the MCM family. In terms of assembly, component of the mcm2-7 complex (RLF-M). The complex forms a toroidal hexameric ring with the proposed subunit order mcm2-mcm6-mcm4-mcm7-mcm3-mcm5 (By simililarity). Begins to associate with zmcm3, mcm4 and mcm7 into mcm complexes at the neurula stage.

Its subcellular location is the nucleus. It catalyses the reaction ATP + H2O = ADP + phosphate + H(+). Functionally, acts as a component of the mcm2-7 complex (mcm complex) which is the putative replicative helicase essential for 'once per cell cycle' DNA replication initiation and elongation in eukaryotic cells. The active ATPase sites in the mcm2-7 ring are formed through the interaction surfaces of two neighboring subunits such that a critical structure of a conserved arginine finger motif is provided in trans relative to the ATP-binding site of the Walker A box of the adjacent subunit. The six ATPase active sites, however, are likely to contribute differentially to the complex helicase activity. The existence of maternal and zygotic forms of mcm3 and mcm6 suggests that specific forms of mcm2-7 complexes may be used during different stages of development. May replace mmcm6 in the mcm2-7 complex. The sequence is that of Zygotic DNA replication licensing factor mcm6-B (zmcm6-b) from Xenopus laevis (African clawed frog).